Here is a 346-residue protein sequence, read N- to C-terminus: N(4)-(beta-N-acetylglucosaminyl)-L-asparaginase (346 aa).

A signal peptide spans 1–23 (MARKSNLPVLLVPFLLCQALVRC). The residue at position 24 (Ser24) is a Blocked amino end (Ser). Asn38 is a glycosylation site (N-linked (GlcNAc...) asparagine). 2 disulfides stabilise this stretch: Cys64-Cys69 and Cys163-Cys179. Catalysis depends on Thr206, which acts as the Nucleophile. Substrate-binding positions include 234–237 (RVGD) and 257–260 (TGNG). Cys286 and Cys306 are joined by a disulfide. Asn308 is a glycosylation site (N-linked (GlcNAc...) asparagine). A disulfide bond links Cys317 and Cys345.

It belongs to the Ntn-hydrolase family. As to quaternary structure, heterotetramer of two alpha and two beta chains arranged as a dimer of alpha/beta heterodimers. Cleaved into an alpha and beta chain by autocatalysis; this activates the enzyme. The N-terminal residue of the beta subunit is responsible for the nucleophile hydrolase activity. Post-translationally, N-glycosylated.

It is found in the lysosome. It catalyses the reaction N(4)-(beta-N-acetyl-D-glucosaminyl)-L-asparagine + H2O = N-acetyl-beta-D-glucosaminylamine + L-aspartate + H(+). Cleaves the GlcNAc-Asn bond which joins oligosaccharides to the peptide of asparagine-linked glycoproteins. The sequence is that of N(4)-(beta-N-acetylglucosaminyl)-L-asparaginase (AGA) from Homo sapiens (Human).